The sequence spans 309 residues: Cell division protein FtsQ (309 aa).

Residues 1 to 52 (MLALRGRRGKRVRYPADGVAEADEAFVLPRPLRRGVRFLISLGAGRIRFPNH) are Cytoplasmic-facing. Residues 53–74 (TGTVAAAAFMVATGLYGMSLGG) form a helical membrane-spanning segment. Residues 75 to 309 (HTQSFAQVST…KMLKAQEKRI (235 aa)) lie on the Periplasmic side of the membrane. In terms of domain architecture, POTRA spans 89 to 157 (FAIEDVRVSG…GTIEVVLKER (69 aa)).

Belongs to the FtsQ/DivIB family. FtsQ subfamily.

The protein localises to the cell inner membrane. In terms of biological role, essential cell division protein. In Rhizobium meliloti (strain 1021) (Ensifer meliloti), this protein is Cell division protein FtsQ.